Here is a 148-residue protein sequence, read N- to C-terminus: Lysozyme C (148 aa).

The first 18 residues, 1–18 (MRALIILGLVLLSVTVQG), serve as a signal peptide directing secretion. A C-type lysozyme domain is found at 19–148 (KIFERCELAR…VSQYVKGCGV (130 aa)). Intrachain disulfides connect Cys-24–Cys-146, Cys-48–Cys-134, Cys-83–Cys-99, and Cys-95–Cys-113. Active-site residues include Glu-53 and Asp-71.

Belongs to the glycosyl hydrolase 22 family. Monomer.

It localises to the secreted. The catalysed reaction is Hydrolysis of (1-&gt;4)-beta-linkages between N-acetylmuramic acid and N-acetyl-D-glucosamine residues in a peptidoglycan and between N-acetyl-D-glucosamine residues in chitodextrins.. Its function is as follows. Lysozymes have primarily a bacteriolytic function; those in tissues and body fluids are associated with the monocyte-macrophage system and enhance the activity of immunoagents. Also plays a role in digestion in this species. This chain is Lysozyme C (LYZ), found in Trachypithecus francoisi (Francois' leaf monkey).